The chain runs to 443 residues: Trigger factor (443 aa).

In terms of domain architecture, PPIase FKBP-type spans 169–254 (GDIAFLDFSG…LNSIKEVQLP (86 aa)).

The protein belongs to the FKBP-type PPIase family. Tig subfamily.

It is found in the cytoplasm. It catalyses the reaction [protein]-peptidylproline (omega=180) = [protein]-peptidylproline (omega=0). In terms of biological role, involved in protein export. Acts as a chaperone by maintaining the newly synthesized protein in an open conformation. Functions as a peptidyl-prolyl cis-trans isomerase. This Mycoplasmoides gallisepticum (strain R(low / passage 15 / clone 2)) (Mycoplasma gallisepticum) protein is Trigger factor.